A 747-amino-acid chain; its full sequence is Transcription factor phm2 (747 aa).

A DNA-binding region (zn(2)-C6 fungal-type) is located at residues 21–50 (CNACRKRKRVRCDRLHPCSNCASRGLGSTC). 2 disordered regions span residues 112–150 (GLQNQGSDARSDARCQPTPLSSETEFEYPVAPSPSDHGS) and 414–436 (TAEPRNLYDTDFDEDSSALPESR).

It localises to the nucleus. Transcription factor that regulates the expression of the gene cluster that mediates the biosynthesis of the trans-fused decalin-containing tetramic acid phomasetin. This chain is Transcription factor phm2, found in Pyrenochaetopsis sp.